We begin with the raw amino-acid sequence, 481 residues long: Aromatic amino acid aminotransferase C1773.13 (481 aa).

The protein belongs to the class-I pyridoxal-phosphate-dependent aminotransferase family. The cofactor is pyridoxal 5'-phosphate.

The protein resides in the cytoplasm. It catalyses the reaction an aromatic L-alpha-amino acid + 2-oxoglutarate = an aromatic oxo-acid + L-glutamate. Has aromatic amino acid transaminase activity. The protein is Aromatic amino acid aminotransferase C1773.13 of Schizosaccharomyces pombe (strain 972 / ATCC 24843) (Fission yeast).